The following is a 235-amino-acid chain: Uracil-DNA glycosylase (235 aa).

D71 acts as the Proton acceptor in catalysis.

It belongs to the uracil-DNA glycosylase (UDG) superfamily. UNG family.

It localises to the cytoplasm. The catalysed reaction is Hydrolyzes single-stranded DNA or mismatched double-stranded DNA and polynucleotides, releasing free uracil.. In terms of biological role, excises uracil residues from the DNA which can arise as a result of misincorporation of dUMP residues by DNA polymerase or due to deamination of cytosine. The protein is Uracil-DNA glycosylase of Campylobacter hominis (strain ATCC BAA-381 / DSM 21671 / CCUG 45161 / LMG 19568 / NCTC 13146 / CH001A).